The following is a 496-amino-acid chain: MLKIKLEKTTFENAKAECSLVFIINKDFSHAWVKNKELLETFKYEGEGVFLDQENKILYAGVKEDDVHLLRESACLAVRTLKKLAFKSVKVGVYTCGAHSKDNALLENLKALFLGLKLGLYEYDTFKSNKKESVLKEAIVALELHKPCEKTCANSLEKSAKEALKYAEIMTESLNIVKDLVNTPPMIGTPVYMAEVAQKVAKENHLEIHVHDEKFLEEKKMNAFLAVNKASLSVNPPRLIHLVYKPKKAKKKIALVGKGLTYDCGGLSLKPADYMVTMKADKGGGSAVIGLLNALAKLGVEAEVHGIIGATENMIGPAAYKPDDILISKEGKSIEVRNTDAEGRLVLADCLSYAQDLNPDVIVDFATLTGACVVGLGEFTSAIMGHNEELKNLFETSGLESGELLAKLPFNRHLKKLIESKIADVCNISSSRYGGAITAGLFLNEFIRDEFKDKWLHIDIAGPAYVEKEWDVNSFGASGAGVRACTAFVEELLKKA.

The Mn(2+) site is built by lysine 258 and aspartate 263. The active site involves lysine 270. Aspartate 281, aspartate 340, and glutamate 342 together coordinate Mn(2+). Residue arginine 344 is part of the active site.

The protein belongs to the peptidase M17 family. Mn(2+) serves as cofactor.

It is found in the cytoplasm. The enzyme catalyses Release of an N-terminal amino acid, Xaa-|-Yaa-, in which Xaa is preferably Leu, but may be other amino acids including Pro although not Arg or Lys, and Yaa may be Pro. Amino acid amides and methyl esters are also readily hydrolyzed, but rates on arylamides are exceedingly low.. It catalyses the reaction Release of an N-terminal amino acid, preferentially leucine, but not glutamic or aspartic acids.. Its function is as follows. Presumably involved in the processing and regular turnover of intracellular proteins. Catalyzes the removal of unsubstituted N-terminal amino acids from various peptides. This chain is Cytosol aminopeptidase (pepA), found in Helicobacter pylori (strain ATCC 700392 / 26695) (Campylobacter pylori).